The sequence spans 266 residues: ATP synthase subunit a (266 aa).

5 helical membrane passes run 33-53 (FWTLNIDSMFFSVVLGLLFLA), 95-115 (VIAPLALTVFVWVFLMNLMDL), 141-161 (DVNITLSMALGVFILIIFYSI), 206-226 (LFGNMYAGELIFILIAGLLPW), and 237-257 (AIFHILIITLQAFIFMVLTIV).

Belongs to the ATPase A chain family. F-type ATPases have 2 components, CF(1) - the catalytic core - and CF(0) - the membrane proton channel. CF(1) has five subunits: alpha(3), beta(3), gamma(1), delta(1), epsilon(1). CF(0) has three main subunits: a(1), b(2) and c(9-12). The alpha and beta chains form an alternating ring which encloses part of the gamma chain. CF(1) is attached to CF(0) by a central stalk formed by the gamma and epsilon chains, while a peripheral stalk is formed by the delta and b chains.

The protein resides in the cell inner membrane. Its function is as follows. Key component of the proton channel; it plays a direct role in the translocation of protons across the membrane. This is ATP synthase subunit a from Klebsiella pneumoniae subsp. pneumoniae (strain ATCC 700721 / MGH 78578).